Here is a 202-residue protein sequence, read N- to C-terminus: Small ribosomal subunit protein uS4 (202 aa).

The interval 15–42 (LGDLPGLTRKAAKRSYPPGQHGQARRKR) is disordered. Residues 90–152 (SRLDNICFRL…KGSKQLAEGN (63 aa)) form the S4 RNA-binding domain.

The protein belongs to the universal ribosomal protein uS4 family. As to quaternary structure, part of the 30S ribosomal subunit. Contacts protein S5. The interaction surface between S4 and S5 is involved in control of translational fidelity.

In terms of biological role, one of the primary rRNA binding proteins, it binds directly to 16S rRNA where it nucleates assembly of the body of the 30S subunit. Functionally, with S5 and S12 plays an important role in translational accuracy. This chain is Small ribosomal subunit protein uS4, found in Synechococcus sp. (strain CC9902).